The following is a 199-amino-acid chain: Ras-related and estrogen-regulated growth inhibitor (199 aa).

GTP-binding positions include 13 to 20, 60 to 64, and 118 to 121; these read GRAGVGKS, DTAGQ, and NKAD.

Belongs to the small GTPase superfamily. Ras family.

The protein resides in the cytoplasm. The catalysed reaction is GTP + H2O = GDP + phosphate + H(+). Binds GDP/GTP and possesses intrinsic GTPase activity. Has higher affinity for GDP than for GTP. The chain is Ras-related and estrogen-regulated growth inhibitor (RERG) from Bos taurus (Bovine).